A 585-amino-acid chain; its full sequence is Lipoprotein LpqB (585 aa).

A signal peptide spans 1–17; it reads MGRKLLGLLMLAVLLAG. A lipid anchor (N-palmitoyl cysteine) is attached at C18. A lipid anchor (S-diacylglycerol cysteine) is attached at C18. Disordered stretches follow at residues 24-46 and 560-585; these read SSAP…KPTP and PSAD…VLPG.

It belongs to the LpqB lipoprotein family.

The protein resides in the cell membrane. The chain is Lipoprotein LpqB from Mycobacterium paratuberculosis.